The primary structure comprises 192 residues: Bifunctional protein PyrR (192 aa).

Substrate contacts are provided by residues 49–50 (SG), arginine 90, 111–119 (DDVLFSGRT), arginine 144, and valine 168. The PRPP-binding signature appears at 107 to 119 (VILVDDVLFSGRT).

This sequence belongs to the purine/pyrimidine phosphoribosyltransferase family. PyrR subfamily.

It catalyses the reaction UMP + diphosphate = 5-phospho-alpha-D-ribose 1-diphosphate + uracil. Functionally, regulates the transcription of the pyrimidine nucleotide (pyr) operon in response to exogenous pyrimidines. Its function is as follows. Also displays a weak uracil phosphoribosyltransferase activity which is not physiologically significant. In Corynebacterium glutamicum (strain ATCC 13032 / DSM 20300 / JCM 1318 / BCRC 11384 / CCUG 27702 / LMG 3730 / NBRC 12168 / NCIMB 10025 / NRRL B-2784 / 534), this protein is Bifunctional protein PyrR.